The chain runs to 500 residues: MFKQFLSKLPRKSSKSDSGELNRSSSGPVSSPVQRSGTSGGGSGPVRSNSGKRMSSAVFPASVVAGIEPLVPFKDVPSSEKLNLFVSKVSLCCVTFDFSDPGKNSIEKDVKRQTLLELLDFVASGSVKFTEPAILAMCRMCAVNLFRVFPPNYRSSSGGENDDDEPMFDPAWPHLQIVYDLLLKFITSPCLDAKVAKKYLDHAFIVRLLDLFDSEDPRERECLKTILHRVYGKFMVHRPFVRKSMSNIFYRFVFETEKHSGIAELLEIFGSIVSGFALPLKEEHKIFLWRVLIPLHKPKSVGNYFQQLSYCITQFIDKEPKLGSVVIKGLLKFWPITNSQKEVMFLGEVEEIVEAMSVMEFQKIMVPLFLRIACCVTSSHFQVSERALFLWNNDQIVNLIGHNRQAILPIMFTALEKNAQNHWNQSVLNLTLNVRKMFCEMDEALFMSCHARFKEDEAKQCSAAEKRKEVWARLENAASMKPITGKTAVLVTPRATSIAC.

The segment at 1–53 (MFKQFLSKLPRKSSKSDSGELNRSSSGPVSSPVQRSGTSGGGSGPVRSNSGKR) is disordered. Over residues 21 to 37 (LNRSSSGPVSSPVQRSG) the composition is skewed to polar residues.

It belongs to the phosphatase 2A regulatory subunit B56 family. As to quaternary structure, PP2A consists of a common heteromeric enzyme, composed of a catalytic subunit (subunits C), a constant regulatory subunit (subunit A), and a variety of regulatory subunits such as subunits B (the R2/B/PR55/B55, R3/B''/PR72/PR130/PR59 and R5/B'/B56 families).

The protein resides in the cytoplasm. Its function is as follows. The B regulatory subunit may modulate substrate selectivity and catalytic activity, and may also direct the localization of the catalytic enzyme to a particular subcellular compartment. The polypeptide is Serine/threonine protein phosphatase 2A 57 kDa regulatory subunit B' kappa isoform (B'KAPPA) (Arabidopsis thaliana (Mouse-ear cress)).